Reading from the N-terminus, the 419-residue chain is Akuammiline synthase 1 (419 aa).

Catalysis depends on His-151, which acts as the Proton acceptor. The Nuclear localization signal motif lies at 206 to 213 (TRRFVFPA). Asp-359 acts as the Proton acceptor in catalysis.

It belongs to the plant acyltransferase family. In terms of assembly, monomer.

It is found in the cytoplasm. The protein resides in the nucleus. It catalyses the reaction rhazimol + acetyl-CoA = akuammiline + CoA + H(+). It participates in alkaloid biosynthesis. Its function is as follows. Acyltransferase involved in the biosynthesis of akuammilan monoterpene indole alkaloids (MIAs) natural products, components with various biological properties such as antidiabetic, antibacterial, anti-inflammatory, anticancer, and antimalarial activities. Catalyzes the conversion of rhazimol to akuammiline. The protein is Akuammiline synthase 1 of Alstonia scholaris (Dogbane).